The following is a 1039-amino-acid chain: Potassium-transporting ATPase alpha chain 2 (1039 aa).

Topologically, residues 1 to 102 (MHQKTPEIYS…NSLTPPKQTP (102 aa)) are cytoplasmic. Residues 103-123 (EIVKFLKQMVGGFSILLWVGA) traverse the membrane as a helical segment. The Lumenal portion of the chain corresponds to 124-146 (FLCWIAYGIQYSSDKSASLNNVY). Residues 147-167 (LGCVLGLVVILTGIFAYYQEA) traverse the membrane as a helical segment. Residues 168–303 (KSTNIMSSFN…NEKTPIAIEI (136 aa)) are Cytoplasmic-facing. A helical transmembrane segment spans residues 304–323 (EHFVHIVAGVAVSIGILFFI). Residues 324–335 (IAVSLKYQVLDS) lie on the Lumenal side of the membrane. The chain crosses the membrane as a helical span at residues 336 to 353 (IIFLIGIIVANVPEGLLA). The Cytoplasmic segment spans residues 354–787 (TVTVTLSLTA…EEGRLIFDNL (434 aa)). Asp391 functions as the 4-aspartylphosphate intermediate in the catalytic mechanism. Residues Asp732 and Asp736 each coordinate Mg(2+). Residues 788–807 (KKTIAYSLTKNIAELCPFLI) form a helical membrane-spanning segment. Residues 808-817 (YIIVGLPLPI) lie on the Lumenal side of the membrane. Residues 818–838 (GTITILFIDLGTDIIPSIALA) form a helical membrane-spanning segment. Topologically, residues 839 to 858 (YEKAESDIMNRKPRHKNKDR) are cytoplasmic. A helical membrane pass occupies residues 859–881 (LVNQPLAVYSYLHIGLMQALGAF). At 882–933 (LVYFTVYAQEGFLPRTLINLRVEWEKDYVNDLKDSYGQEWTRYQREYLEWTG) the chain is on the lumenal side. Residues 934–953 (YTAFFVGILVQQIADLIIRK) traverse the membrane as a helical segment. Residues 954 to 967 (TRRNSIFQQGLFRN) lie on the Cytoplasmic side of the membrane. Ser958 is modified (phosphoserine; by PKA). A helical transmembrane segment spans residues 968-986 (KVIWVGITSQIIIGLILSY). Residues 987 to 1001 (GLGSVTALSFTMLRA) are Lumenal-facing. Residues 1002–1022 (QYWFVAVPHAILIWVYDEVRK) form a helical membrane-spanning segment. Topologically, residues 1023 to 1039 (LFIRLYPGSWWDKNMYY) are cytoplasmic.

It belongs to the cation transport ATPase (P-type) (TC 3.A.3) family. Type IIC subfamily. The ATPase pump is composed of a catalytic alpha subunit and an auxiliary non-catalytic beta subunit. The alpha subunit pairs with the beta subunit of gastric H(+)/K(+) ATPase ATP4B or the beta subunit of Na(+)/K(+) ATPases ATP1B1 and ATP1B3; this interaction is required for the formation of a functionally active pump and its targeting at the plasma membrane. As to expression, expressed in airway epithelial cells (at protein level). Found in skin and kidney. Detected in prostate basal cells (at protein level). Expression is increased in benign prostate hyperplasia and tumor tissues (at protein level).

Its subcellular location is the apical cell membrane. The enzyme catalyses K(+)(out) + ATP + H2O + H(+)(in) = K(+)(in) + ADP + phosphate + 2 H(+)(out). It catalyses the reaction K(+)(out) + Na(+)(in) + ATP + H2O = K(+)(in) + Na(+)(out) + ADP + phosphate + H(+). Its activity is regulated as follows. The ATPase activity is regulated by monovalent cations and pH. Up-regulated by K(+) ions in a dose-dependent way. Down-regulated by Na(+) ions. Inhibited by Na(+)/K(+)-ATPase inhibitor ouabain and H(+)/K(+)-ATPase inhibitor SCH-28080 with an intermediate sensitivity to completely resistant Na(+)/K(+)-ATPases and highly sensitive H(+)/K(+)-ATPases. Its function is as follows. The catalytic subunit of a H(+)/K(+) ATPase and/or Na(+)/K(+) ATPase pump which transports K(+) ions in exchange for Na(+) and/or H(+) ions across the apical membrane of epithelial cells. Uses ATP as an energy source to pump K(+) ions into the cell while transporting Na(+) and/or H(+) ions to the extracellular compartment. Involved in the maintenance of electrolyte homeostasis through K(+) ion absorption in kidney and colon. In the airway epithelium, may play a primary role in mucus acidification regulating its viscosity and clearance. The protein is Potassium-transporting ATPase alpha chain 2 of Homo sapiens (Human).